The primary structure comprises 404 residues: Probable mannosyltransferase KTR3 (404 aa).

Topologically, residues 1-27 (MSVHHKKKLMPKSALLIRKYQKGIRSS) are cytoplasmic. Residues 28–44 (FIGLIIVLSFLFFMSGS) traverse the membrane as a helical; Signal-anchor for type II membrane protein segment. Residues 45–83 (RSPEVPIAQGTSVSRVASKDYLMPFTDKSQGVIHPVDDG) form a stem region region. Residues 45–404 (RSPEVPIAQG…AGNYKLPPGI (360 aa)) lie on the Lumenal side of the membrane. Residues 84-404 (KKEKGVMVTL…AGNYKLPPGI (321 aa)) form a catalytic region. Glu295 (nucleophile) is an active-site residue.

Belongs to the glycosyltransferase 15 family. As to quaternary structure, interacts with SVP26.

The protein resides in the membrane. Possible glycosyltransferase that transfers an alpha-D-mannosyl residue from GDP-mannose into lipid-linked oligosaccharide, forming an alpha-(1-&gt;2)-D-mannosyl-D-mannose linkage. In Saccharomyces cerevisiae (strain ATCC 204508 / S288c) (Baker's yeast), this protein is Probable mannosyltransferase KTR3 (KTR3).